Here is a 380-residue protein sequence, read N- to C-terminus: Sialidase-2 (380 aa).

The FRIP motif signature appears at 20 to 23 (YRIP). Residues R21 and R41 each coordinate substrate. The active-site Proton acceptor is the D46. The stretch at 127–138 (VTSTDHGRTWSS) is one BNR 1 repeat. Substrate-binding residues include Y179 and Y181. One copy of the BNR 2 repeat lies at 197 to 208 (FLSHDHGRTWAR). Positions 218, 237, and 304 each coordinate substrate. The Nucleophile role is filled by Y334. The active site involves E355.

The protein belongs to the glycosyl hydrolase 33 family. As to expression, expressed in skeletal muscle, fetal liver and embryonic carcinoma cell line NT2-D1.

Its subcellular location is the cytoplasm. The protein resides in the cytosol. It catalyses the reaction Hydrolysis of alpha-(2-&gt;3)-, alpha-(2-&gt;6)-, alpha-(2-&gt;8)- glycosidic linkages of terminal sialic acid residues in oligosaccharides, glycoproteins, glycolipids, colominic acid and synthetic substrates.. The enzyme catalyses a ganglioside GD1a + H2O = a ganglioside GM1 + N-acetylneuraminate. The catalysed reaction is a ganglioside GM1 + H2O = a ganglioside GA1 + N-acetylneuraminate. It carries out the reaction a ganglioside GT1b + H2O = a ganglioside GD1b + N-acetylneuraminate. It catalyses the reaction a ganglioside GD1b + H2O = a ganglioside GM1 + N-acetylneuraminate. The enzyme catalyses a ganglioside GD3 + H2O = a ganglioside GM3 + N-acetylneuraminate. The catalysed reaction is a ganglioside GM3 + H2O = a beta-D-galactosyl-(1-&gt;4)-beta-D-glucosyl-(1&lt;-&gt;1)-ceramide + N-acetylneuraminate. It carries out the reaction a ganglioside GM2 + H2O = a ganglioside GA2 + N-acetylneuraminate. It catalyses the reaction a neolactoside IV(3)-alpha-NeuAc-nLc4Cer(d18:1(4E)) + H2O = a neolactoside nLc4Cer(d18:1(4E)) + N-acetylneuraminate. The enzyme catalyses N-acetyl-alpha-neuraminosyl-(2-&gt;3)-beta-D-galactosyl-(1-&gt;4)-D-glucose + H2O = lactose + N-acetylneuraminate. Exo-alpha-sialidase that catalyzes the hydrolytic cleavage of the terminal sialic acid (N-acetylneuraminic acid, Neu5Ac) of a glycan moiety in the catabolism of glycolipids, glycoproteins and oligosacharides. Recognizes sialyl linkage positions of the glycan moiety as well as the supramolecular organization of the sialoglycoconjugate. Displays preference for alpha-(2-&gt;3)-sialylated GD1a and GT1B gangliosides over alpha-(2-&gt;8)-sialylated GD1b, in both monomeric forms and micelles. Hydrolyzes monomeric GM1 ganglioside, but has no activity toward the miscellar form. Has lower sialidase activity for glycoproteins such as fetuin and TF/transferrin that carry a mixture of alpha-(2-&gt;3) and alpha-(2-&gt;6)-sialyl linkages. Cleaves milk oligosaccharide alpha-(2-&gt;3)-sialyllactose, but is inactive toward alpha-(2-&gt;6)-sialyllactose isomer. Has no activity toward colominic acid, a homomer of alpha-(2-&gt;8)-linked Neu5Ac residues. In Homo sapiens (Human), this protein is Sialidase-2 (NEU2).